The sequence spans 293 residues: ATP synthase gamma chain (293 aa).

It belongs to the ATPase gamma chain family. In terms of assembly, F-type ATPases have 2 components, CF(1) - the catalytic core - and CF(0) - the membrane proton channel. CF(1) has five subunits: alpha(3), beta(3), gamma(1), delta(1), epsilon(1). CF(0) has three main subunits: a, b and c.

The protein resides in the cell inner membrane. Functionally, produces ATP from ADP in the presence of a proton gradient across the membrane. The gamma chain is believed to be important in regulating ATPase activity and the flow of protons through the CF(0) complex. This chain is ATP synthase gamma chain, found in Sinorhizobium fredii (strain NBRC 101917 / NGR234).